Consider the following 1386-residue polypeptide: DNA-directed RNA polymerase subunit beta'' (1386 aa).

Residues cysteine 224, cysteine 294, cysteine 301, and cysteine 304 each coordinate Zn(2+).

Belongs to the RNA polymerase beta' chain family. RpoC2 subfamily. In terms of assembly, in plastids the minimal PEP RNA polymerase catalytic core is composed of four subunits: alpha, beta, beta', and beta''. When a (nuclear-encoded) sigma factor is associated with the core the holoenzyme is formed, which can initiate transcription. It depends on Zn(2+) as a cofactor.

It is found in the plastid. The protein resides in the chloroplast. The enzyme catalyses RNA(n) + a ribonucleoside 5'-triphosphate = RNA(n+1) + diphosphate. DNA-dependent RNA polymerase catalyzes the transcription of DNA into RNA using the four ribonucleoside triphosphates as substrates. This Acorus calamus (Sweet flag) protein is DNA-directed RNA polymerase subunit beta''.